We begin with the raw amino-acid sequence, 409 residues long: Na(+)-translocating NADH-quinone reductase subunit F (409 aa).

The helical transmembrane segment at 5-25 threads the bilayer; that stretch reads FIFGIGAFTAIVLVLAVVILI. The 2Fe-2S ferredoxin-type domain maps to 34–128; it reads GDITISINDD…SMDVELPEEV (95 aa). The [2Fe-2S] cluster site is built by Cys-71, Cys-77, Cys-80, and Cys-112. The region spanning 131-271 is the FAD-binding FR-type domain; the sequence is VKKWECTVIS…SGPFGEFFAK (141 aa).

Belongs to the NqrF family. Composed of six subunits; NqrA, NqrB, NqrC, NqrD, NqrE and NqrF. Requires [2Fe-2S] cluster as cofactor. It depends on FAD as a cofactor.

It localises to the cell inner membrane. The enzyme catalyses a ubiquinone + n Na(+)(in) + NADH + H(+) = a ubiquinol + n Na(+)(out) + NAD(+). NQR complex catalyzes the reduction of ubiquinone-1 to ubiquinol by two successive reactions, coupled with the transport of Na(+) ions from the cytoplasm to the periplasm. The first step is catalyzed by NqrF, which accepts electrons from NADH and reduces ubiquinone-1 to ubisemiquinone by a one-electron transfer pathway. In Actinobacillus succinogenes (strain ATCC 55618 / DSM 22257 / CCUG 43843 / 130Z), this protein is Na(+)-translocating NADH-quinone reductase subunit F.